Consider the following 265-residue polypeptide: Methylthioribulose-1-phosphate dehydratase (265 aa).

Cysteine 116 serves as a coordination point for substrate. Histidine 134 and histidine 136 together coordinate Zn(2+). The Proton donor/acceptor role is filled by glutamate 159. Histidine 224 provides a ligand contact to Zn(2+).

The protein belongs to the aldolase class II family. MtnB subfamily. It depends on Zn(2+) as a cofactor.

It is found in the cytoplasm. The enzyme catalyses 5-(methylsulfanyl)-D-ribulose 1-phosphate = 5-methylsulfanyl-2,3-dioxopentyl phosphate + H2O. The protein operates within amino-acid biosynthesis; L-methionine biosynthesis via salvage pathway; L-methionine from S-methyl-5-thio-alpha-D-ribose 1-phosphate: step 2/6. In terms of biological role, catalyzes the dehydration of methylthioribulose-1-phosphate (MTRu-1-P) into 2,3-diketo-5-methylthiopentyl-1-phosphate (DK-MTP-1-P). The protein is Methylthioribulose-1-phosphate dehydratase of Debaryomyces hansenii (strain ATCC 36239 / CBS 767 / BCRC 21394 / JCM 1990 / NBRC 0083 / IGC 2968) (Yeast).